Reading from the N-terminus, the 203-residue chain is MAPTFYHYHPLPMDQKEPGCGIRWRCLAAASVLILVALVIPLIIFAVKANSEACRDGLRAQEECSNTTRLLQRQLTRSQDNLAQAEAQASTCNRTVVTLQDSLEKKVSQIQEKQALIQEQEAQIKEQEAQIKEQEAQIKEQKAHIQEQQVRIQKLEGEVEEFEQKLKKLRTAEEASITSKQNSAGSMAVSSLLVLAVPLFLLF.

The Cytoplasmic segment spans residues 1–26 (MAPTFYHYHPLPMDQKEPGCGIRWRC). Residues 27–47 (LAAASVLILVALVIPLIIFAV) form a helical; Signal-anchor for type II membrane protein membrane-spanning segment. Residues 48–183 (KANSEACRDG…EASITSKQNS (136 aa)) lie on the Extracellular side of the membrane. 2 N-linked (GlcNAc...) asparagine glycosylation sites follow: Asn66 and Asn93. A coiled-coil region spans residues 66-178 (NTTRLLQRQL…LRTAEEASIT (113 aa)). Residue Ser183 is the site of GPI-anchor amidated serine attachment. Positions 184–203 (AGSMAVSSLLVLAVPLFLLF) are cleaved as a propeptide — removed in mature form.

In terms of assembly, parallel homodimer; disulfide-linked. May form homotetramers under reducing conditions. Isoform 1 and isoform 2 form homodimers and also heterodimers with each other. Dimerization is essential for its antiviral activity. Interacts (via cytoplasmic domain) with ARHGAP44. Interacts with MMP14 (via C-terminal cytoplasmic tail). Interacts with LILRA4/ILT7. Interacts with RNF115. Post-translationally, the GPI anchor is essential for its antiviral activity.

It is found in the golgi apparatus. The protein resides in the trans-Golgi network. The protein localises to the cell membrane. It localises to the late endosome. Its subcellular location is the membrane raft. It is found in the cytoplasm. The protein resides in the apical cell membrane. Functionally, IFN-induced antiviral host restriction factor which efficiently blocks the release of diverse mammalian enveloped viruses by directly tethering nascent virions to the membranes of infected cells. Acts as a direct physical tether, holding virions to the cell membrane and linking virions to each other. The tethered virions can be internalized by endocytosis and subsequently degraded or they can remain on the cell surface. In either case, their spread as cell-free virions is restricted. Its target viruses belong to diverse families, including retroviridae: human immunodeficiency virus type 1 (HIV-1), mouse mammary tumor virus (MMTV) and murine leukemia virus (MLV), filoviridae: ebola virus (EBOV), arenaviridae: lassa virus (LASV), and rhabdoviridae: vesicular stomatitis virus (VSV). Can inhibit cell surface proteolytic activity of MMP14 causing decreased activation of MMP15 which results in inhibition of cell growth and migration. Can stimulate signaling by LILRA4/ILT7 and consequently provide negative feedback to the production of IFN by plasmacytoid dendritic cells in response to viral infection. Plays a role in the organization of the subapical actin cytoskeleton in polarized epithelial cells. This is Bone marrow stromal antigen 2 (Bst2) from Cricetulus griseus (Chinese hamster).